The primary structure comprises 103 residues: Putative membrane protein insertion efficiency factor (103 aa).

Belongs to the UPF0161 family.

It localises to the cell inner membrane. Functionally, could be involved in insertion of integral membrane proteins into the membrane. This is Putative membrane protein insertion efficiency factor from Chlamydia caviae (strain ATCC VR-813 / DSM 19441 / 03DC25 / GPIC) (Chlamydophila caviae).